A 138-amino-acid polypeptide reads, in one-letter code: Large ribosomal subunit protein uL16 (138 aa).

A compositionally biased stretch (basic residues) spans 1 to 18 (MALMPKRVKHRKSQRGRI). A disordered region spans residues 1–21 (MALMPKRVKHRKSQRGRIKGN).

The protein belongs to the universal ribosomal protein uL16 family. As to quaternary structure, part of the 50S ribosomal subunit.

Its function is as follows. Binds 23S rRNA and is also seen to make contacts with the A and possibly P site tRNAs. This Rhodopirellula baltica (strain DSM 10527 / NCIMB 13988 / SH1) protein is Large ribosomal subunit protein uL16.